We begin with the raw amino-acid sequence, 697 residues long: Putative cryptochrome DASH (697 aa).

Positions lysine 5–tyrosine 164 constitute a Photolyase/cryptochrome alpha/beta domain. 2 disordered regions span residues aspartate 170–tryptophan 215 and phenylalanine 554–isoleucine 697. Over residues lysine 188–arginine 198 the composition is skewed to basic and acidic residues. Basic residues predominate over residues arginine 560–arginine 569. Positions glycine 578–serine 590 are enriched in gly residues. Composition is skewed to low complexity over residues glutamine 659–glutamine 675 and arginine 683–isoleucine 697.

Belongs to the DNA photolyase class-1 family. FAD serves as cofactor. (6R)-5,10-methylene-5,6,7,8-tetrahydrofolate is required as a cofactor.

May have a photoreceptor function. This is Putative cryptochrome DASH from Gibberella zeae (strain ATCC MYA-4620 / CBS 123657 / FGSC 9075 / NRRL 31084 / PH-1) (Wheat head blight fungus).